A 347-amino-acid polypeptide reads, in one-letter code: Phenylalanine--tRNA ligase alpha subunit (347 aa).

Glu261 serves as a coordination point for Mg(2+).

Belongs to the class-II aminoacyl-tRNA synthetase family. Phe-tRNA synthetase alpha subunit type 1 subfamily. In terms of assembly, tetramer of two alpha and two beta subunits. The cofactor is Mg(2+).

The protein resides in the cytoplasm. The catalysed reaction is tRNA(Phe) + L-phenylalanine + ATP = L-phenylalanyl-tRNA(Phe) + AMP + diphosphate + H(+). This Streptococcus mutans serotype c (strain ATCC 700610 / UA159) protein is Phenylalanine--tRNA ligase alpha subunit.